The following is a 371-amino-acid chain: Barbiturase 2 (371 aa).

The interval 1 to 104 (MTRPIEVRKV…TIFAYAPEGR (104 aa)) is RU A. Substrate is bound by residues Arg53 and 83–84 (SG). The segment at 112 to 247 (RVTVGYAMSE…AQIVVVGNAR (136 aa)) is RU B. Residue Lys162 is part of the active site. Substrate is bound by residues Asn194 and 230–231 (SS). Ser230 functions as the Nucleophile in the catalytic mechanism. An RU C region spans residues 253–371 (FRVGHSIMKD…PVIAIVDLEA (119 aa)). Residue Glu303 coordinates Mg(2+). Substrate-binding positions include Lys330 and 349 to 350 (SV). Ala352, Gln355, Gly356, Pro357, and Gly360 together coordinate Mg(2+).

The protein belongs to the cyclic amide hydrolase (CyAH) family. Homotetramer.

It catalyses the reaction barbiturate + H2O = 3-oxo-3-ureidopropanoate. It participates in pyrimidine metabolism; uracil degradation via oxidative pathway; malonate and urea from uracil: step 2/3. Responsible for the hydrolysis of barbituric acid (2,4,6-trihydroxy-1,3-pyrimidine), an intermediate in the oxidative catabolism of pyrimidines. Catalyzes the hydrolytic opening of the pyrimidine ring of barbituric acid to yield ureidomalonic acid. Can also use cyanuric acid as a substrate, albeit with lower efficiency. The polypeptide is Barbiturase 2 (Nocardioides sp. (strain ATCC BAA-499 / JS614)).